A 293-amino-acid chain; its full sequence is 4-diphosphocytidyl-2-C-methyl-D-erythritol kinase (293 aa).

K10 is an active-site residue. 94-104 (PVSAGLAGGSS) serves as a coordination point for ATP. D136 is an active-site residue.

This sequence belongs to the GHMP kinase family. IspE subfamily.

The enzyme catalyses 4-CDP-2-C-methyl-D-erythritol + ATP = 4-CDP-2-C-methyl-D-erythritol 2-phosphate + ADP + H(+). Its pathway is isoprenoid biosynthesis; isopentenyl diphosphate biosynthesis via DXP pathway; isopentenyl diphosphate from 1-deoxy-D-xylulose 5-phosphate: step 3/6. In terms of biological role, catalyzes the phosphorylation of the position 2 hydroxy group of 4-diphosphocytidyl-2C-methyl-D-erythritol. This is 4-diphosphocytidyl-2-C-methyl-D-erythritol kinase from Listeria monocytogenes serovar 1/2a (strain ATCC BAA-679 / EGD-e).